The following is a 297-amino-acid chain: CASP-like protein 2U8 (297 aa).

Over 1 to 10 the chain is Cytoplasmic; sequence MLELYEKRRA. Residues 11–31 traverse the membrane as a helical segment; sequence LLLLRLAAMFLSLAALLITVL. Residues 32 to 64 are Extracellular-facing; sequence NREDGFFSINVFGSPQPILAKATADFTLVKGLK. A helical transmembrane segment spans residues 65–85; the sequence is FFAGAMGIVAGYSFLQLAIAM. The Cytoplasmic segment spans residues 86–101; the sequence is ASIFSGAPSILGGKRM. A helical membrane pass occupies residues 102–122; that stretch reads AWLCFVGDMTASHLCAAAAAV. The Extracellular segment spans residues 123–148; the sequence is SAQLAYLGKRGAPMWSAVCTYFSHYC. The helical transmembrane segment at 149–169 threads the bilayer; that stretch reads LVFGLAVILAFLATLAALLVA. Topologically, residues 170 to 297 are cytoplasmic; the sequence is SISSYHLAYD…RVLEMETPCK (128 aa).

This sequence belongs to the Casparian strip membrane proteins (CASP) family. As to quaternary structure, homodimer and heterodimers.

It localises to the cell membrane. The sequence is that of CASP-like protein 2U8 from Selaginella moellendorffii (Spikemoss).